Here is a 338-residue protein sequence, read N- to C-terminus: 3-dehydroquinate synthase (338 aa).

Belongs to the archaeal-type DHQ synthase family.

The catalysed reaction is 2-amino-2,3,7-trideoxy-D-lyxo-hept-6-ulosonate + NAD(+) + H2O = 3-dehydroquinate + NH4(+) + NADH + H(+). Catalyzes the oxidative deamination and cyclization of 2-amino-3,7-dideoxy-D-threo-hept-6-ulosonic acid (ADH) to yield 3-dehydroquinate (DHQ), which is fed into the canonical shikimic pathway of aromatic amino acid biosynthesis. This is 3-dehydroquinate synthase from Cenarchaeum symbiosum (strain A).